Here is a 221-residue protein sequence, read N- to C-terminus: LHFPL tetraspan subfamily member 5 protein (221 aa).

Residues 1 to 24 are Cytoplasmic-facing; that stretch reads MPKLLPAQEAARIYHTNYVRNARA. Residues 25–45 traverse the membrane as a helical segment; it reads MGVLWALFTLCFSILMVVTFI. At 46–98 the chain is on the extracellular side; it reads QPYWIGDSIDTPQAGYFGLFSYCIGNALTGELICKGSPLDFGTIPSSAFKTAM. Residues 99-119 traverse the membrane as a helical segment; it reads FFVGISTFLIIGSILCFSLFF. Residues 120 to 128 lie on the Cytoplasmic side of the membrane; it reads FCNAATVYK. A helical membrane pass occupies residues 129–149; sequence VCAWMQLAAATGLMIGCLIYP. Over 150–179 the chain is Extracellular; sequence DGWDSSEVKRMCGDKTDKYTLGACTVRWAY. The chain crosses the membrane as a helical span at residues 180 to 200; the sequence is ILCIIGILDALILSFLAFVLG. Residues 201–221 are Cytoplasmic-facing; it reads NRQDNLLPSDFKVESKEEGNE.

This sequence belongs to the LHFP family.

The protein resides in the cell membrane. Its function is as follows. Probable component of the mechanotransducer (MET) non-specific cation channel complex. This Gallus gallus (Chicken) protein is LHFPL tetraspan subfamily member 5 protein.